Here is a 350-residue protein sequence, read N- to C-terminus: Galactokinase (350 aa).

15–18 (EHTD) contacts substrate. ATP contacts are provided by residues serine 47 and 99–105 (GAGLSSS). Residues serine 105 and glutamate 137 each coordinate Mg(2+). Aspartate 149 (proton acceptor) is an active-site residue. Tyrosine 198 serves as a coordination point for substrate.

Belongs to the GHMP kinase family. GalK subfamily.

Its subcellular location is the cytoplasm. It carries out the reaction alpha-D-galactose + ATP = alpha-D-galactose 1-phosphate + ADP + H(+). Its pathway is carbohydrate metabolism; galactose metabolism. Functionally, catalyzes the transfer of the gamma-phosphate of ATP to D-galactose to form alpha-D-galactose-1-phosphate (Gal-1-P). The chain is Galactokinase from Pyrococcus horikoshii (strain ATCC 700860 / DSM 12428 / JCM 9974 / NBRC 100139 / OT-3).